The sequence spans 89 residues: Co-chaperonin GroES (89 aa).

This sequence belongs to the GroES chaperonin family. In terms of assembly, heptamer of 7 subunits arranged in a ring. Interacts with the chaperonin GroEL.

The protein localises to the cytoplasm. Functionally, together with the chaperonin GroEL, plays an essential role in assisting protein folding. The GroEL-GroES system forms a nano-cage that allows encapsulation of the non-native substrate proteins and provides a physical environment optimized to promote and accelerate protein folding. GroES binds to the apical surface of the GroEL ring, thereby capping the opening of the GroEL channel. This is Co-chaperonin GroES from Fervidobacterium nodosum (strain ATCC 35602 / DSM 5306 / Rt17-B1).